The following is a 66-amino-acid chain: Large ribosomal subunit protein uL29 (66 aa).

It belongs to the universal ribosomal protein uL29 family.

The chain is Large ribosomal subunit protein uL29 from Rhizobium leguminosarum bv. trifolii (strain WSM2304).